Consider the following 515-residue polypeptide: 2-isopropylmalate synthase (515 aa).

The 263-residue stretch at 5 to 267 folds into the Pyruvate carboxyltransferase domain; the sequence is VIIFDTTLRD…DTRINTQEIH (263 aa). Positions 14, 202, 204, and 238 each coordinate Mn(2+). The regulatory domain stretch occupies residues 392 to 515; sequence VLDKLSAHST…VADIKNHKHH (124 aa).

The protein belongs to the alpha-IPM synthase/homocitrate synthase family. LeuA type 1 subfamily. In terms of assembly, homodimer. It depends on Mn(2+) as a cofactor.

It localises to the cytoplasm. The catalysed reaction is 3-methyl-2-oxobutanoate + acetyl-CoA + H2O = (2S)-2-isopropylmalate + CoA + H(+). It participates in amino-acid biosynthesis; L-leucine biosynthesis; L-leucine from 3-methyl-2-oxobutanoate: step 1/4. In terms of biological role, catalyzes the condensation of the acetyl group of acetyl-CoA with 3-methyl-2-oxobutanoate (2-ketoisovalerate) to form 3-carboxy-3-hydroxy-4-methylpentanoate (2-isopropylmalate). This is 2-isopropylmalate synthase from Haemophilus influenzae (strain PittEE).